A 593-amino-acid chain; its full sequence is Elongation factor 4 (593 aa).

The tr-type G domain occupies 2-181 (DKIRNFCIIA…AVIERIPHPQ (180 aa)). GTP-binding positions include 14–19 (DHGKST) and 128–131 (NKCD).

Belongs to the TRAFAC class translation factor GTPase superfamily. Classic translation factor GTPase family. LepA subfamily.

It localises to the cell inner membrane. The catalysed reaction is GTP + H2O = GDP + phosphate + H(+). Its function is as follows. Required for accurate and efficient protein synthesis under certain stress conditions. May act as a fidelity factor of the translation reaction, by catalyzing a one-codon backward translocation of tRNAs on improperly translocated ribosomes. Back-translocation proceeds from a post-translocation (POST) complex to a pre-translocation (PRE) complex, thus giving elongation factor G a second chance to translocate the tRNAs correctly. Binds to ribosomes in a GTP-dependent manner. The sequence is that of Elongation factor 4 from Bacteroides fragilis (strain ATCC 25285 / DSM 2151 / CCUG 4856 / JCM 11019 / LMG 10263 / NCTC 9343 / Onslow / VPI 2553 / EN-2).